We begin with the raw amino-acid sequence, 394 residues long: Protein DDI1 homolog 2 (394 aa).

One can recognise a Ubiquitin-like domain in the interval 1-81; the sequence is MLITVYCVRR…VILRQRETPE (81 aa). The tract at residues 82–128 is disordered; that stretch reads ARPAAPFPGLDFSTIAVPGSSSQPAPSQPQAPPPPPPDTSSFPQGLD. Positions 107 to 119 are enriched in pro residues; that stretch reads PSQPQAPPPPPPD. The active site involves Asp247. The Ubiquitin-binding signature appears at 371–390; sequence EEIADRELAEVLQKSAEEAD.

The protein belongs to the DDI1 family. In terms of assembly, homodimer.

The protein localises to the cytoplasm. It is found in the cytosol. Its subcellular location is the chromosome. Its function is as follows. Aspartic protease that mediates the cleavage of NFE2L1/NRF1 at 'Leu-104', thereby promoting release of NFE2L1/NRF1 from the endoplasmic reticulum membrane. Ubiquitination of NFE2L1/NRF1 is a prerequisite for cleavage, suggesting that DDI2 specifically recognizes and binds ubiquitinated NFE2L1/NRF1. Seems to act as a proteasomal shuttle which links the proteasome and replication fork proteins like RTF2. Required for cellular survival following replication stress. In Xenopus tropicalis (Western clawed frog), this protein is Protein DDI1 homolog 2 (ddi2).